Reading from the N-terminus, the 208-residue chain is Uracil phosphoribosyltransferase (208 aa).

5-phospho-alpha-D-ribose 1-diphosphate is bound by residues Arg78, Arg103, and 130 to 138; that span reads DPMFATGGT. Uracil-binding positions include Ile193 and 198 to 200; that span reads GDA. Asp199 contributes to the 5-phospho-alpha-D-ribose 1-diphosphate binding site.

The protein belongs to the UPRTase family. Mg(2+) is required as a cofactor.

It catalyses the reaction UMP + diphosphate = 5-phospho-alpha-D-ribose 1-diphosphate + uracil. It participates in pyrimidine metabolism; UMP biosynthesis via salvage pathway; UMP from uracil: step 1/1. Its activity is regulated as follows. Allosterically activated by GTP. Functionally, catalyzes the conversion of uracil and 5-phospho-alpha-D-ribose 1-diphosphate (PRPP) to UMP and diphosphate. The chain is Uracil phosphoribosyltransferase from Campylobacter jejuni subsp. jejuni serotype O:2 (strain ATCC 700819 / NCTC 11168).